Reading from the N-terminus, the 144-residue chain is Large ribosomal subunit protein uL15 (144 aa).

The disordered stretch occupies residues 1–54 (MRLNTLSPAPGRVSAKKRVGRGIGSGLGKTAGRGHKGLKSRSGGSVKPGFEGGQ). Over residues 21–31 (RGIGSGLGKTA) the composition is skewed to gly residues.

This sequence belongs to the universal ribosomal protein uL15 family. Part of the 50S ribosomal subunit.

Binds to the 23S rRNA. The polypeptide is Large ribosomal subunit protein uL15 (Saccharophagus degradans (strain 2-40 / ATCC 43961 / DSM 17024)).